Here is a 411-residue protein sequence, read N- to C-terminus: cAMP-dependent protein kinase regulatory subunit (411 aa).

Positions Met-1–Thr-144 are disordered. The segment at Ala-23 to Phe-159 is dimerization and phosphorylation. Residues Ser-46–Ser-58 are compositionally biased toward low complexity. Residues Glu-85–Pro-96 are compositionally biased toward acidic residues. A compositionally biased stretch (polar residues) spans Thr-119–Trp-136. Position 120 is a phosphoserine (Ser-120). 3',5'-cyclic AMP is bound by residues Leu-160–Glu-289, Glu-238, Arg-247, Leu-292–Ala-411, Glu-359, and Arg-368.

Belongs to the cAMP-dependent kinase regulatory chain family. In terms of assembly, tetramer, composed of 2 regulatory (R) and 2 catalytic (C) subunits. In the presence of cAMP it dissociates into 2 active monomeric C subunits and an R dimer.

The protein is cAMP-dependent protein kinase regulatory subunit (pkaR) of Aspergillus niger.